We begin with the raw amino-acid sequence, 706 residues long: Axin-related protein (706 aa).

The RGS domain maps to 72–191 (SLNLLLDDQD…LQSDICKEYA (120 aa)). Disordered regions lie at residues 278–298 (MTDG…REIH), 400–482 (TPAN…GTSA), and 585–605 (STTL…GFST). A compositionally biased stretch (polar residues) spans 402–412 (ANLSPRSQSPF). The span at 453–462 (RSSVSSQLPR) shows a compositional bias: low complexity. One can recognise a DIX domain in the interval 624-706 (GQGLAIVYYF…KIICKVERAC (83 aa)).

Interacts with dvl2/dsh via DIX domains in both proteins. Forms a complex with ctnnb1/beta-catenin and gsk3b. Also forms heterodimers with mouse Axin1.

It localises to the cytoplasm. Its subcellular location is the cytoplasmic vesicle. Functionally, regulates the wnt signaling pathway by interacting with dvl2/dsh, which displaces gsk3b from the axnr-gsk3b complex and thus prevents degradation of ctnnb1/beta-catenin. The sequence is that of Axin-related protein from Xenopus laevis (African clawed frog).